A 457-amino-acid chain; its full sequence is Cysteine--tRNA ligase (457 aa).

Cys-27 contacts Zn(2+). Residues 29–39 (PTVYDFAHIGN) carry the 'HIGH' region motif. Residues Cys-211, His-236, and Glu-240 each contribute to the Zn(2+) site. The 'KMSKS' region motif lies at 269–273 (KMSKS). Lys-272 lines the ATP pocket.

The protein belongs to the class-I aminoacyl-tRNA synthetase family. As to quaternary structure, monomer. Requires Zn(2+) as cofactor.

The protein resides in the cytoplasm. It catalyses the reaction tRNA(Cys) + L-cysteine + ATP = L-cysteinyl-tRNA(Cys) + AMP + diphosphate. The chain is Cysteine--tRNA ligase from Ehrlichia ruminantium (strain Gardel).